Reading from the N-terminus, the 239-residue chain is Uridylate kinase (239 aa).

Position 10–13 (10–13 (KLSG)) interacts with ATP. Glycine 52 contributes to the UMP binding site. ATP contacts are provided by glycine 53 and arginine 57. UMP contacts are provided by residues aspartate 72 and 133 to 140 (TGNPFFTT). The ATP site is built by threonine 160, tyrosine 166, and aspartate 169.

Belongs to the UMP kinase family. In terms of assembly, homohexamer.

Its subcellular location is the cytoplasm. The enzyme catalyses UMP + ATP = UDP + ADP. It functions in the pathway pyrimidine metabolism; CTP biosynthesis via de novo pathway; UDP from UMP (UMPK route): step 1/1. With respect to regulation, inhibited by UTP. In terms of biological role, catalyzes the reversible phosphorylation of UMP to UDP. The protein is Uridylate kinase of Porphyromonas gingivalis (strain ATCC BAA-308 / W83).